Here is a 235-residue protein sequence, read N- to C-terminus: MSSSSHRGILKTEALTKYLLETSAYPREHEQLKGLREATVEKHKYWSLMNVPVDEGLFISMLLKIMNAKKTIELGVFTGYSLLATALALPQDGKIIAVDPDKEAYQTGVPFIKKAGVEHKINFIQSDAMSVLNDLIADGKEEGTLDFAMVDADKENYLNYHELLLKLVRVGGIIAYDNTLWFGSVARSEEEEMMDFERAGRVHLMKLNKFLASDPRVELSHLSIGDGVALCRRLY.

Residues valine 51, glutamate 73, 75–76 (GV), serine 81, aspartate 99, and alanine 128 contribute to the S-adenosyl-L-methionine site. Aspartate 151 contributes to the a divalent metal cation binding site. Aspartate 153 is a binding site for S-adenosyl-L-methionine. The a divalent metal cation site is built by aspartate 177 and asparagine 178.

It belongs to the class I-like SAM-binding methyltransferase superfamily. Cation-dependent O-methyltransferase family. CCoAMT subfamily. The cofactor is a divalent metal cation.

The protein localises to the cytoplasm. The enzyme catalyses S-adenosyl-L-methionine + a 3'-hydroxyflavonoid = S-adenosyl-L-homocysteine + a 3'-methoxyflavonoid.. The catalysed reaction is S-adenosyl-L-methionine + a 5'-hydroxy-3'-methoxyflavonoid = S-adenosyl-L-homocysteine + a 3',5'-dimethoxyflavonoid.. It participates in pigment biosynthesis; anthocyanin biosynthesis. Its function is as follows. Mediates O-methylation of anthocyanins. Anthocyanins are major pigments in grapes: at ripening initiation in red grapevine berries, the exocarp turns color from green to red and then to purple due to the accumulation and extent of methylation of anthocyanins. Catalyzes both 3' and 5' O-methylation of anthocyanins, with a preference for glycosylated substrates. Active on both anthocyanins and flavonols in vitro. Most active with delphinidin 3-glucoside but also acts on cyanidin 3-glucoside, cyanidin, myricetin, quercetin and quercetin 3-glucoside. Not able to methylate flavan type skeletons with chiral centers, such as catechins or dihydroquercetin. This chain is Flavonoid 3',5'-methyltransferase (FAOMT), found in Vitis vinifera (Grape).